A 299-amino-acid chain; its full sequence is tRNA dimethylallyltransferase (299 aa).

Residue 13–20 coordinates ATP; the sequence is GPTASGKT. 15 to 20 is a substrate binding site; it reads TASGKT. Residues 38–41 are interaction with substrate tRNA; it reads DSRQ.

This sequence belongs to the IPP transferase family. Monomer. Mg(2+) is required as a cofactor.

It carries out the reaction adenosine(37) in tRNA + dimethylallyl diphosphate = N(6)-dimethylallyladenosine(37) in tRNA + diphosphate. Functionally, catalyzes the transfer of a dimethylallyl group onto the adenine at position 37 in tRNAs that read codons beginning with uridine, leading to the formation of N6-(dimethylallyl)adenosine (i(6)A). This Parasynechococcus marenigrum (strain WH8102) protein is tRNA dimethylallyltransferase.